A 178-amino-acid chain; its full sequence is Interleukin-10 (178 aa).

Positions 1–18 are cleaved as a signal peptide; that stretch reads MHSSALLCCLVVLTGVRA. 2 disulfides stabilise this stretch: Cys30/Cys126 and Cys80/Cys132. Asn134 carries N-linked (GlcNAc...) asparagine glycosylation.

Belongs to the IL-10 family. As to quaternary structure, homodimer. Interacts with IL10RA and IL10RB.

The protein resides in the secreted. Functionally, major immune regulatory cytokine that acts on many cells of the immune system where it has profound anti-inflammatory functions, limiting excessive tissue disruption caused by inflammation. Mechanistically, IL10 binds to its heterotetrameric receptor comprising IL10RA and IL10RB leading to JAK1 and STAT2-mediated phosphorylation of STAT3. In turn, STAT3 translocates to the nucleus where it drives expression of anti-inflammatory mediators. Targets antigen-presenting cells (APCs) such as macrophages and monocytes and inhibits their release of pro-inflammatory cytokines including granulocyte-macrophage colony-stimulating factor /GM-CSF, granulocyte colony-stimulating factor/G-CSF, IL-1 alpha, IL-1 beta, IL-6, IL-8 and TNF-alpha. Also interferes with antigen presentation by reducing the expression of MHC-class II and co-stimulatory molecules, thereby inhibiting their ability to induce T cell activation. In addition, controls the inflammatory response of macrophages by reprogramming essential metabolic pathways including mTOR signaling. In Papio hamadryas (Hamadryas baboon), this protein is Interleukin-10 (IL10).